A 484-amino-acid chain; its full sequence is Tubulin-like protein TubZ (484 aa).

Residue 32-33 (QK) participates in GTP binding. Position 64 (D64) interacts with Mg(2+). Residues 140–142 (GVG), N213, K237, and N241 contribute to the GTP site. A required to bind TubR-DNA complex region spans residues 408–484 (RKQDEEKVDI…LKTSNPFKKR (77 aa)). The interval 428–484 (TFNPYNKNQGFGGASRFSGGKNSAFKRQTSEATSTQNQQEEENIISTLKTSNPFKKR) is disordered. Residues 452 to 484 (FKRQTSEATSTQNQQEEENIISTLKTSNPFKKR) show a composition bias toward polar residues.

The protein belongs to the FtsZ family. TubZ subfamily. As to quaternary structure, forms filaments; a 2-stranded filament forms with the non-hydrolyzable GTP-gamma-S which is probably a precursor to the 4-stranded filament that forms in the presence of GTP. The 4-stranded form binds GDP. In vivo polymerizes to form dynamic filaments that often extend from one cell pole to the other, moving in a unidirectional manner. Filaments polymerize at the plus end and depolymerize at the minus end, a process called treadmilling. Polymerization only occurs above a critical concentration, it does not require upstream tubR. The tubC DNA-TubR complex binds to TubZ. Requires Mg(2+) as cofactor.

Its subcellular location is the cytoplasm. The catalysed reaction is GTP + H2O = GDP + phosphate + H(+). Its activity is regulated as follows. GTPase is inhibited by GTP-gamma-S, which also stabilizes filaments. A tubulin-like, filament forming GTPase; the motor component of the type III plasmid partition system which ensures correct segregation of the pBtoxis plasmid. Filaments may seed from the centromere-like site (tubC) when bound by DNA-binding protein TubR; the tubC-TubR complex stabilizes the TubZ filament. Filaments grow at the plus end and depolymerize at the minus end, a process called treadmilling. TubR-tubC complexes track the depolymerizing minus end of the filament, probably pulling plasmid within the cell. Required for pBtoxis plasmid replication/partition. Binds the TubR-tubC complex; GTP is not required for binding to TubR-tubC. TubZ alone does not bind DNA. Has a high GTPase activity in the presence of Mg(2+); in the presence of GTP assembles into dynamic filaments which upon polymerization bind almost exclusively GDP. Filament formation is cooperative, requiring a critical concentration. Formation occurs very quickly and is followed by disassembly as GTP is consumed. The polypeptide is Tubulin-like protein TubZ (Bacillus thuringiensis subsp. israelensis).